Here is a 64-residue protein sequence, read N- to C-terminus: Large ribosomal subunit protein bL28 (64 aa).

Belongs to the bacterial ribosomal protein bL28 family.

The polypeptide is Large ribosomal subunit protein bL28 (Elusimicrobium minutum (strain Pei191)).